Consider the following 339-residue polypeptide: NADH-quinone oxidoreductase subunit H (339 aa).

9 helical membrane passes run 9 to 29, 50 to 70, 82 to 102, 115 to 135, 161 to 181, 187 to 207, 235 to 255, 275 to 295, and 311 to 331; these read IFPL…LILC, PNVV…KLLF, ILFI…WAVI, VGVL…IIAG, MGLV…SGII, MPWW…ISVL, MGFA…SAMT, IPGF…FLWI, and GWKV…SVLV.

The protein belongs to the complex I subunit 1 family. As to quaternary structure, NDH-1 is composed of 14 different subunits. Subunits NuoA, H, J, K, L, M, N constitute the membrane sector of the complex.

The protein resides in the cell inner membrane. It catalyses the reaction a quinone + NADH + 5 H(+)(in) = a quinol + NAD(+) + 4 H(+)(out). NDH-1 shuttles electrons from NADH, via FMN and iron-sulfur (Fe-S) centers, to quinones in the respiratory chain. The immediate electron acceptor for the enzyme in this species is believed to be ubiquinone. Couples the redox reaction to proton translocation (for every two electrons transferred, four hydrogen ions are translocated across the cytoplasmic membrane), and thus conserves the redox energy in a proton gradient. This subunit may bind ubiquinone. In Rickettsia conorii (strain ATCC VR-613 / Malish 7), this protein is NADH-quinone oxidoreductase subunit H.